A 161-amino-acid chain; its full sequence is Peroxynitrite isomerase (161 aa).

Residues 17-23 (GSWVGRG) carry the GXWXGXG motif. Residue His-152 participates in heme b binding.

Belongs to the nitrobindin family. As to quaternary structure, homodimer. Heme b serves as cofactor.

It carries out the reaction peroxynitrite = nitrate. It participates in nitrogen metabolism. In terms of biological role, heme-binding protein able to scavenge peroxynitrite and to protect free L-tyrosine against peroxynitrite-mediated nitration, by acting as a peroxynitrite isomerase that converts peroxynitrite to nitrate. Therefore, this protein likely plays a role in peroxynitrite sensing and in the detoxification of reactive nitrogen and oxygen species (RNS and ROS, respectively). Is able to bind nitric oxide (NO) in vitro, but may act as a sensor of peroxynitrite levels in vivo. This chain is Peroxynitrite isomerase, found in Mycobacterium leprae (strain TN).